The following is a 441-amino-acid chain: NADH-quinone oxidoreductase subunit D 1 (441 aa).

It belongs to the complex I 49 kDa subunit family. As to quaternary structure, NDH-1 is composed of 14 different subunits. Subunits NuoB, C, D, E, F, and G constitute the peripheral sector of the complex.

The protein localises to the cell membrane. The catalysed reaction is a quinone + NADH + 5 H(+)(in) = a quinol + NAD(+) + 4 H(+)(out). Functionally, NDH-1 shuttles electrons from NADH, via FMN and iron-sulfur (Fe-S) centers, to quinones in the respiratory chain. The immediate electron acceptor for the enzyme in this species is believed to be a menaquinone. Couples the redox reaction to proton translocation (for every two electrons transferred, four hydrogen ions are translocated across the cytoplasmic membrane), and thus conserves the redox energy in a proton gradient. This chain is NADH-quinone oxidoreductase subunit D 1, found in Salinispora arenicola (strain CNS-205).